The following is a 159-amino-acid chain: 2-C-methyl-D-erythritol 2,4-cyclodiphosphate synthase (159 aa).

A divalent metal cation is bound by residues Asp10 and His12. Residues 10–12 and 36–37 each bind 4-CDP-2-C-methyl-D-erythritol 2-phosphate; these read DVH and HS. An a divalent metal cation-binding site is contributed by His44. 4-CDP-2-C-methyl-D-erythritol 2-phosphate is bound by residues 58 to 60, 63 to 67, and Arg144; these read DIG and FSDTD.

It belongs to the IspF family. Homotrimer. It depends on a divalent metal cation as a cofactor.

The catalysed reaction is 4-CDP-2-C-methyl-D-erythritol 2-phosphate = 2-C-methyl-D-erythritol 2,4-cyclic diphosphate + CMP. Its pathway is isoprenoid biosynthesis; isopentenyl diphosphate biosynthesis via DXP pathway; isopentenyl diphosphate from 1-deoxy-D-xylulose 5-phosphate: step 4/6. In terms of biological role, involved in the biosynthesis of isopentenyl diphosphate (IPP) and dimethylallyl diphosphate (DMAPP), two major building blocks of isoprenoid compounds. Catalyzes the conversion of 4-diphosphocytidyl-2-C-methyl-D-erythritol 2-phosphate (CDP-ME2P) to 2-C-methyl-D-erythritol 2,4-cyclodiphosphate (ME-CPP) with a corresponding release of cytidine 5-monophosphate (CMP). The polypeptide is 2-C-methyl-D-erythritol 2,4-cyclodiphosphate synthase (Paraburkholderia phytofirmans (strain DSM 17436 / LMG 22146 / PsJN) (Burkholderia phytofirmans)).